A 585-amino-acid chain; its full sequence is Arginine--tRNA ligase (585 aa).

Positions 127-137 match the 'HIGH' region motif; it reads PNTNKPLHVGH.

This sequence belongs to the class-I aminoacyl-tRNA synthetase family. As to quaternary structure, monomer.

The protein localises to the cytoplasm. The catalysed reaction is tRNA(Arg) + L-arginine + ATP = L-arginyl-tRNA(Arg) + AMP + diphosphate. The polypeptide is Arginine--tRNA ligase (Borreliella afzelii (strain PKo) (Borrelia afzelii)).